The chain runs to 711 residues: DNA topoisomerase 1 (711 aa).

One can recognise a Toprim domain in the interval 3–134; that stretch reads KNLVVIESPN…KCQRITFNEI (132 aa). Positions 9 and 102 each coordinate Mg(2+). The Topo IA-type catalytic domain maps to 150-604; the sequence is DQSWVQSQFA…FWSNFKEEVK (455 aa). Residues 183–188 form an interaction with DNA region; that stretch reads SAGRVQ. The active-site O-(5'-phospho-DNA)-tyrosine intermediate is Tyr340. 2 consecutive C4-type zinc fingers follow at residues 624–652 and 673–702; these read CPSC…FPNC and CPEC…FPRC.

It belongs to the type IA topoisomerase family. As to quaternary structure, monomer. Requires Mg(2+) as cofactor.

The enzyme catalyses ATP-independent breakage of single-stranded DNA, followed by passage and rejoining.. In terms of biological role, releases the supercoiling and torsional tension of DNA, which is introduced during the DNA replication and transcription, by transiently cleaving and rejoining one strand of the DNA duplex. Introduces a single-strand break via transesterification at a target site in duplex DNA. The scissile phosphodiester is attacked by the catalytic tyrosine of the enzyme, resulting in the formation of a DNA-(5'-phosphotyrosyl)-enzyme intermediate and the expulsion of a 3'-OH DNA strand. The free DNA strand then undergoes passage around the unbroken strand, thus removing DNA supercoils. Finally, in the religation step, the DNA 3'-OH attacks the covalent intermediate to expel the active-site tyrosine and restore the DNA phosphodiester backbone. This chain is DNA topoisomerase 1, found in Mycoplasma pneumoniae (strain ATCC 29342 / M129 / Subtype 1) (Mycoplasmoides pneumoniae).